Consider the following 330-residue polypeptide: Ketol-acid reductoisomerase (NADP(+)) (330 aa).

The region spanning 2-181 (AKVYYDNDVN…GATRAGVIET (180 aa)) is the KARI N-terminal Rossmann domain. NADP(+) is bound by residues 25–28 (YGSQ), R48, S52, and 82–85 (DEVQ). H107 is a catalytic residue. G133 contributes to the NADP(+) binding site. Residues 182–327 (TFKEETETDL…ADLRMMMPFI (146 aa)) enclose the KARI C-terminal knotted domain. Mg(2+) is bound by residues D190, E194, E226, and E230. S251 provides a ligand contact to substrate.

This sequence belongs to the ketol-acid reductoisomerase family. Mg(2+) serves as cofactor.

The enzyme catalyses (2R)-2,3-dihydroxy-3-methylbutanoate + NADP(+) = (2S)-2-acetolactate + NADPH + H(+). It carries out the reaction (2R,3R)-2,3-dihydroxy-3-methylpentanoate + NADP(+) = (S)-2-ethyl-2-hydroxy-3-oxobutanoate + NADPH + H(+). Its pathway is amino-acid biosynthesis; L-isoleucine biosynthesis; L-isoleucine from 2-oxobutanoate: step 2/4. The protein operates within amino-acid biosynthesis; L-valine biosynthesis; L-valine from pyruvate: step 2/4. Functionally, involved in the biosynthesis of branched-chain amino acids (BCAA). Catalyzes an alkyl-migration followed by a ketol-acid reduction of (S)-2-acetolactate (S2AL) to yield (R)-2,3-dihydroxy-isovalerate. In the isomerase reaction, S2AL is rearranged via a Mg-dependent methyl migration to produce 3-hydroxy-3-methyl-2-ketobutyrate (HMKB). In the reductase reaction, this 2-ketoacid undergoes a metal-dependent reduction by NADPH to yield (R)-2,3-dihydroxy-isovalerate. In Macrococcus caseolyticus (strain JCSC5402) (Macrococcoides caseolyticum), this protein is Ketol-acid reductoisomerase (NADP(+)).